The chain runs to 91 residues: Alpha-latrotoxin associated low molecular weight protein SGV150-311 (91 aa).

Positions 1–18 (MNVLHFLILLMSVVSVFC) are cleaved as a signal peptide.

This sequence belongs to the arthropod CHH/MIH/GIH/VIH hormone family. In terms of tissue distribution, expressed by the venom gland.

The protein localises to the secreted. Functionally, may increase the toxicity of alpha-latrotoxin and/or other venom components. Is non-toxic to mice and to the cockroach Periplaneta americana. This is Alpha-latrotoxin associated low molecular weight protein SGV150-311 from Steatoda grossa (False black widow).